An 88-amino-acid chain; its full sequence is Large ribosomal subunit protein eL20 (88 aa).

It belongs to the eukaryotic ribosomal protein eL20 family. Part of the 50S ribosomal subunit. Binds 23S rRNA.

The sequence is that of Large ribosomal subunit protein eL20 from Aeropyrum pernix (strain ATCC 700893 / DSM 11879 / JCM 9820 / NBRC 100138 / K1).